Here is a 1604-residue protein sequence, read N- to C-terminus: E3 ubiquitin-protein ligase HECW1 (1604 aa).

A C2 domain is found at 182–318; that stretch reads SAAPIFKGIG…LERHAIGDRV (137 aa). Disordered stretches follow at residues 350–539, 572–604, 642–667, and 727–826; these read DEEI…CSLP, PSAQRGSTTEEEDGLEEESTLKESSEKDGLSEV, GIGAGQDGEAHPSTGSESDSSPQQGA, and STVF…TIDE. Over residues 362–380 the composition is skewed to polar residues; sequence SAETQDSIMNSMVGNSNGE. The segment covering 387–396 has biased composition (basic and acidic residues); it reads EFCKDAKPES. Over residues 398 to 412 the composition is skewed to polar residues; sequence SEGNGVNSSENQNQE. Acidic residues-rich tracts occupy residues 435–444 and 458–469; these read APEEPGELQD and EVAEGLPLDEDS. A compositionally biased stretch (basic and acidic residues) spans 494–505; sequence GAREEEMQKGKD. Acidic residues predominate over residues 580–589; it reads TEEEDGLEEE. Residues 590–601 are compositionally biased toward basic and acidic residues; the sequence is STLKESSEKDGL. Composition is skewed to polar residues over residues 654-667, 748-762, and 803-812; these read STGSESDSSPQQGA, DSVQSPELDPESTNG, and HNSQPISQLP. A WW 1 domain is found at 826–859; that stretch reads EPLPPNWEARIDSHGRVFYVDHINRTTTWQRPSM. Residue Ser871 is modified to Phosphoserine. Residues 871–898 adopt a coiled-coil conformation; that stretch reads SVHQMEQLNRRYQNIQRTMATERAEEDS. The interval 890–936 is disordered; it reads ATERAEEDSGNQNSEQIPDGGGGGGGGSDSEAESSQSSLDLRREGSL. The segment covering 908–917 has biased composition (gly residues); it reads DGGGGGGGGS. Phosphoserine is present on residues Ser935 and Ser937. One can recognise a WW 2 domain in the interval 1016-1049; it reads LELPRGWEIKTDHQGKSFFVDHNSRATTFIDPRI. The HECT domain occupies 1269-1604; sequence SRKELQRNKL…VEETSTFGLE (336 aa). The Glycyl thioester intermediate role is filled by Cys1572.

Interacts with DVL1 and SSR3. As to expression, predominantly expressed in neurons of the spinal cord.

It is found in the cytoplasm. It catalyses the reaction S-ubiquitinyl-[E2 ubiquitin-conjugating enzyme]-L-cysteine + [acceptor protein]-L-lysine = [E2 ubiquitin-conjugating enzyme]-L-cysteine + N(6)-ubiquitinyl-[acceptor protein]-L-lysine.. It participates in protein modification; protein ubiquitination. E3 ubiquitin-protein ligase that mediates ubiquitination and subsequent degradation of DVL1. This is E3 ubiquitin-protein ligase HECW1 (Hecw1) from Mus musculus (Mouse).